A 376-amino-acid chain; its full sequence is Ribosomal RNA large subunit methyltransferase G (376 aa).

The protein belongs to the methyltransferase superfamily. RlmG family.

The protein resides in the cytoplasm. The enzyme catalyses guanosine(1835) in 23S rRNA + S-adenosyl-L-methionine = N(2)-methylguanosine(1835) in 23S rRNA + S-adenosyl-L-homocysteine + H(+). In terms of biological role, specifically methylates the guanine in position 1835 (m2G1835) of 23S rRNA. The protein is Ribosomal RNA large subunit methyltransferase G of Klebsiella pneumoniae (strain 342).